We begin with the raw amino-acid sequence, 423 residues long: Probable sucrose-phosphatase 3b (423 aa).

It belongs to the sucrose phosphatase family. As to quaternary structure, homodimer. Requires Mg(2+) as cofactor.

It carries out the reaction sucrose 6(F)-phosphate + H2O = sucrose + phosphate. It functions in the pathway glycan biosynthesis; sucrose biosynthesis; sucrose from D-fructose 6-phosphate and UDP-alpha-D-glucose: step 2/2. Catalyzes the final step of sucrose synthesis. The protein is Probable sucrose-phosphatase 3b (SPP3B) of Arabidopsis thaliana (Mouse-ear cress).